Here is an 87-residue protein sequence, read N- to C-terminus: MGLLDNLFGRKQQNSSSVAKERLLTVLVHDRVHLTPHDMEEMKREIIAVIERYVEVTNPEAIEVTLTRGEAADHLKADIPLGRSRQQ.

Belongs to the MinE family.

Functionally, prevents the cell division inhibition by proteins MinC and MinD at internal division sites while permitting inhibition at polar sites. This ensures cell division at the proper site by restricting the formation of a division septum at the midpoint of the long axis of the cell. This chain is Cell division topological specificity factor, found in Herpetosiphon aurantiacus (strain ATCC 23779 / DSM 785 / 114-95).